Reading from the N-terminus, the 79-residue chain is Bacteriochlorophyll c-binding protein (79 aa).

An a bacteriochlorophyll c-binding site is contributed by His25.

It belongs to the BChl C/E-binding protein family.

The protein localises to the chlorosome. It is found in the chlorosome envelope. Its function is as follows. Component of the photosynthetic apparatus. The light harvesting B740 complex binds bacteriochlorophyll c. This Chlorobaculum tepidum (strain ATCC 49652 / DSM 12025 / NBRC 103806 / TLS) (Chlorobium tepidum) protein is Bacteriochlorophyll c-binding protein (csmA).